The primary structure comprises 255 residues: 3-oxoacyl-[acyl-carrier-protein] reductase MabA (255 aa).

NADP(+) contacts are provided by residues 33–35 (RGI), Arg-55, 69–70 (DV), Gly-98, Tyr-161, Lys-165, Ile-194, and Arg-205. Tyr-161 serves as the catalytic Proton acceptor.

This sequence belongs to the short-chain dehydrogenases/reductases (SDR) family. Homotetramer.

It localises to the secreted. The protein resides in the cell wall. The enzyme catalyses a (3R)-hydroxyacyl-[ACP] + NADP(+) = a 3-oxoacyl-[ACP] + NADPH + H(+). The protein operates within lipid metabolism; mycolic acid biosynthesis. In terms of biological role, part of the mycobacterial fatty acid elongation system FAS-II, which is involved in mycolic acid biosynthesis. Catalyzes the NADPH-dependent reduction of beta-ketoacyl derivatives, the second step of the FAS-II elongation cycle. This chain is 3-oxoacyl-[acyl-carrier-protein] reductase MabA, found in Mycobacterium avium.